Here is a 287-residue protein sequence, read N- to C-terminus: 4-hydroxybenzoate octaprenyltransferase (287 aa).

A run of 6 helical transmembrane segments spans residues 30–50 (ALWI…FTVG), 89–109 (WEAV…ILPL), 133–153 (FFAI…PMAF), 158–178 (GHVP…SVAY), 199–221 (ALTF…LGIY), and 267–287 (NNWL…AGSF).

The protein belongs to the UbiA prenyltransferase family. Mg(2+) serves as cofactor.

It is found in the cell inner membrane. The enzyme catalyses all-trans-octaprenyl diphosphate + 4-hydroxybenzoate = 4-hydroxy-3-(all-trans-octaprenyl)benzoate + diphosphate. It functions in the pathway cofactor biosynthesis; ubiquinone biosynthesis. Functionally, catalyzes the prenylation of para-hydroxybenzoate (PHB) with an all-trans polyprenyl group. Mediates the second step in the final reaction sequence of ubiquinone-8 (UQ-8) biosynthesis, which is the condensation of the polyisoprenoid side chain with PHB, generating the first membrane-bound Q intermediate 3-octaprenyl-4-hydroxybenzoate. The polypeptide is 4-hydroxybenzoate octaprenyltransferase (Paraburkholderia phytofirmans (strain DSM 17436 / LMG 22146 / PsJN) (Burkholderia phytofirmans)).